Here is a 466-residue protein sequence, read N- to C-terminus: Chromosomal replication initiator protein DnaA (466 aa).

Residues 1–85 (MSLSLWQHCL…FEVGNKPVSA (85 aa)) form a domain I, interacts with DnaA modulators region. The segment at 82–122 (PVSARTTESVPKTVTHPAVNSTPTNSQPVRPSWDNQPQSQL) is disordered. Over residues 85–122 (ARTTESVPKTVTHPAVNSTPTNSQPVRPSWDNQPQSQL) the composition is skewed to polar residues. The segment at 85–129 (ARTTESVPKTVTHPAVNSTPTNSQPVRPSWDNQPQSQLPELNYRS) is domain II. Residues 130–346 (NVNPKHKFDN…GALNRVIANA (217 aa)) are domain III, AAA+ region. Positions 174, 176, 177, and 178 each coordinate ATP. The interval 347–466 (NFTGRAITID…FSNLIRTLSS (120 aa)) is domain IV, binds dsDNA.

This sequence belongs to the DnaA family. In terms of assembly, oligomerizes as a right-handed, spiral filament on DNA at oriC.

It localises to the cytoplasm. Plays an essential role in the initiation and regulation of chromosomal replication. ATP-DnaA binds to the origin of replication (oriC) to initiate formation of the DNA replication initiation complex once per cell cycle. Binds the DnaA box (a 9 base pair repeat at the origin) and separates the double-stranded (ds)DNA. Forms a right-handed helical filament on oriC DNA; dsDNA binds to the exterior of the filament while single-stranded (ss)DNA is stabiized in the filament's interior. The ATP-DnaA-oriC complex binds and stabilizes one strand of the AT-rich DNA unwinding element (DUE), permitting loading of DNA polymerase. After initiation quickly degrades to an ADP-DnaA complex that is not apt for DNA replication. Binds acidic phospholipids. The polypeptide is Chromosomal replication initiator protein DnaA (Proteus mirabilis (strain HI4320)).